Here is a 42-residue protein sequence, read N- to C-terminus: Photosystem I reaction center subunit IX (42 aa).

A helical transmembrane segment spans residues 7 to 27 (YLSVAPVLATLWFGSLAGLLI).

This sequence belongs to the PsaJ family.

It localises to the plastid. It is found in the chloroplast thylakoid membrane. Functionally, may help in the organization of the PsaE and PsaF subunits. This is Photosystem I reaction center subunit IX from Chloranthus spicatus (Chulantree).